Here is a 379-residue protein sequence, read N- to C-terminus: Cytochrome b (379 aa).

The next 4 membrane-spanning stretches (helical) occupy residues 33–53 (FGSL…FLAM), 77–98 (WTIR…FIHV), 113–133 (WNVG…GYVL), and 178–198 (FFAL…IHLL). Heme b-binding residues include His-83 and His-97. The heme b site is built by His-182 and His-196. An a ubiquinone-binding site is contributed by His-201. A run of 4 helical transmembrane segments spans residues 226–246 (TKDF…ALFY), 288–308 (LGGV…PFLQ), 320–340 (LSQF…WIGG), and 347–367 (FINI…FIMP).

The protein belongs to the cytochrome b family. In terms of assembly, the cytochrome bc1 complex contains 11 subunits: 3 respiratory subunits (MT-CYB, CYC1 and UQCRFS1), 2 core proteins (UQCRC1 and UQCRC2) and 6 low-molecular weight proteins (UQCRH/QCR6, UQCRB/QCR7, UQCRQ/QCR8, UQCR10/QCR9, UQCR11/QCR10 and a cleavage product of UQCRFS1). This cytochrome bc1 complex then forms a dimer. Heme b is required as a cofactor.

The protein localises to the mitochondrion inner membrane. Component of the ubiquinol-cytochrome c reductase complex (complex III or cytochrome b-c1 complex) that is part of the mitochondrial respiratory chain. The b-c1 complex mediates electron transfer from ubiquinol to cytochrome c. Contributes to the generation of a proton gradient across the mitochondrial membrane that is then used for ATP synthesis. The polypeptide is Cytochrome b (MT-CYB) (Lepilemur sahamalazensis (Sahamalaza sportive lemur)).